We begin with the raw amino-acid sequence, 475 residues long: Vasculin-like protein 1 (475 aa).

Phosphoserine occurs at positions 49 and 76. Disordered regions lie at residues 92 to 115 and 160 to 191; these read NLSGWHGSSRGHDGMSQRAGGSTG and PSLNPEAGKQNQPCRPIGTPSGVWENPPSAKQ. Ser202 carries the phosphoserine modification. 2 disordered regions span residues 237 to 271 and 292 to 318; these read LVPKPAPPPSKPNAWKANRMEHKPGSLSSSREAAL and PKESPSSTTPPIEISSSRLTKLTRRTT. Positions 294-311 are enriched in low complexity; that stretch reads ESPSSTTPPIEISSSRLT. Thr300 carries the post-translational modification Phosphothreonine. Ser383 carries the phosphoserine modification. The segment at 456-475 is disordered; the sequence is CEDSDTETSSSETSDDDAWK.

It belongs to the vasculin family.

It is found in the nucleus. Its function is as follows. Possible transcription factor. The polypeptide is Vasculin-like protein 1 (Gpbp1l1) (Rattus norvegicus (Rat)).